We begin with the raw amino-acid sequence, 801 residues long: Transducin beta-like protein 3 (801 aa).

N-acetylalanine is present on Ala-2. 13 WD repeats span residues 64–105 (EDQE…RLWK), 107–146 (IHTA…GTHH), 149–190 (GSPG…CLAV), 193–232 (AHYS…TTRT), 245–284 (LPEQ…CVYT), 290–329 (GLRQ…LQKQ), 332–372 (GYSE…CQIL), 374–413 (GHTD…QVAC), 419–459 (GHTH…LAKS), 477–516 (CHDK…LLGV), 519–560 (GHRR…KTFE), 562–602 (HDAS…RTLD), and 604–642 (HEDK…EQAE). A Phosphoserine modification is found at Ser-257. Lys-407 participates in a covalent cross-link: Glycyl lysine isopeptide (Lys-Gly) (interchain with G-Cter in SUMO2).

Part of the small subunit (SSU) processome, composed of more than 70 proteins and the RNA chaperone small nucleolar RNA (snoRNA) U3.

The protein localises to the nucleus. The protein resides in the nucleolus. Its function is as follows. Part of the small subunit (SSU) processome, first precursor of the small eukaryotic ribosomal subunit. During the assembly of the SSU processome in the nucleolus, many ribosome biogenesis factors, an RNA chaperone and ribosomal proteins associate with the nascent pre-rRNA and work in concert to generate RNA folding, modifications, rearrangements and cleavage as well as targeted degradation of pre-ribosomal RNA by the RNA exosome. The sequence is that of Transducin beta-like protein 3 (Tbl3) from Mus musculus (Mouse).